The following is a 279-amino-acid chain: 4-diphosphocytidyl-2-C-methyl-D-erythritol kinase (279 aa).

Residue Lys-11 is part of the active site. ATP is bound at residue 95–105 (PVAAGLGGGSS). Residue Asp-137 is part of the active site.

This sequence belongs to the GHMP kinase family. IspE subfamily.

The catalysed reaction is 4-CDP-2-C-methyl-D-erythritol + ATP = 4-CDP-2-C-methyl-D-erythritol 2-phosphate + ADP + H(+). Its pathway is isoprenoid biosynthesis; isopentenyl diphosphate biosynthesis via DXP pathway; isopentenyl diphosphate from 1-deoxy-D-xylulose 5-phosphate: step 3/6. In terms of biological role, catalyzes the phosphorylation of the position 2 hydroxy group of 4-diphosphocytidyl-2C-methyl-D-erythritol. The chain is 4-diphosphocytidyl-2-C-methyl-D-erythritol kinase from Geotalea daltonii (strain DSM 22248 / JCM 15807 / FRC-32) (Geobacter daltonii).